Reading from the N-terminus, the 464-residue chain is Cysteine--tRNA ligase (464 aa).

Residue C32 participates in Zn(2+) binding. The 'HIGH' region motif lies at 34 to 44 (VTVYDDCHIGH). 3 residues coordinate Zn(2+): C213, H238, and E242. Positions 270–274 (KMSKS) match the 'KMSKS' region motif. K273 lines the ATP pocket.

The protein belongs to the class-I aminoacyl-tRNA synthetase family. As to quaternary structure, monomer. Requires Zn(2+) as cofactor.

The protein localises to the cytoplasm. It catalyses the reaction tRNA(Cys) + L-cysteine + ATP = L-cysteinyl-tRNA(Cys) + AMP + diphosphate. The chain is Cysteine--tRNA ligase from Francisella tularensis subsp. tularensis (strain SCHU S4 / Schu 4).